A 121-amino-acid chain; its full sequence is Immunoglobulin kappa variable 2-40 (121 aa).

Positions 1–19 (MRLPAQLLGLLMLWVPGSS) are cleaved as a signal peptide. An Ig-like domain is found at 20–121 (EDIVMTQTPL…YYCMQRIEFP (102 aa)). The framework-1 stretch occupies residues 21 to 43 (DIVMTQTPLSLPVTPGEPASISC). Cysteine 43 and cysteine 114 are oxidised to a cystine. Residues 44–60 (RSSQSLLDSDDGNTYLD) form a complementarity-determining-1 region. A framework-2 region spans residues 61-75 (WYLQKPGQSPQLLIY). The complementarity-determining-2 stretch occupies residues 76 to 82 (TLSYRAS). A framework-3 region spans residues 83–114 (GVPDRFSGSGSGTDFTLKISRVEAEDVGVYYC). Positions 115–121 (MQRIEFP) are complementarity-determining-3.

As to quaternary structure, immunoglobulins are composed of two identical heavy chains and two identical light chains; disulfide-linked.

It localises to the secreted. The protein localises to the cell membrane. V region of the variable domain of immunoglobulin light chains that participates in the antigen recognition. Immunoglobulins, also known as antibodies, are membrane-bound or secreted glycoproteins produced by B lymphocytes. In the recognition phase of humoral immunity, the membrane-bound immunoglobulins serve as receptors which, upon binding of a specific antigen, trigger the clonal expansion and differentiation of B lymphocytes into immunoglobulins-secreting plasma cells. Secreted immunoglobulins mediate the effector phase of humoral immunity, which results in the elimination of bound antigens. The antigen binding site is formed by the variable domain of one heavy chain, together with that of its associated light chain. Thus, each immunoglobulin has two antigen binding sites with remarkable affinity for a particular antigen. The variable domains are assembled by a process called V-(D)-J rearrangement and can then be subjected to somatic hypermutations which, after exposure to antigen and selection, allow affinity maturation for a particular antigen. This Homo sapiens (Human) protein is Immunoglobulin kappa variable 2-40.